Consider the following 466-residue polypeptide: Uridine kinase-like protein 3 (466 aa).

The uridine kinase stretch occupies residues 41 to 246 (HGQPFVIGVA…IVQHIHTKLG (206 aa)). The interval 256 to 466 (NLYVIQSTFQ…GDRYFGTDDE (211 aa)) is uracil phosphoribosyltransferase. Residues Lys-280, Arg-289, and 323–326 (CKKL) contribute to the GTP site. Arg-333 and Arg-358 together coordinate 5-phospho-alpha-D-ribose 1-diphosphate. Arg-378 contributes to the GTP binding site. 5-phospho-alpha-D-ribose 1-diphosphate is bound by residues Asp-384, 389 to 392 (TGNS), and Glu-455. Residue 454-456 (GEF) coordinates uracil.

It in the N-terminal section; belongs to the uridine kinase family. In the C-terminal section; belongs to the UPRTase family. Mg(2+) serves as cofactor.

The enzyme catalyses UMP + diphosphate = 5-phospho-alpha-D-ribose 1-diphosphate + uracil. It catalyses the reaction cytidine + ATP = CMP + ADP + H(+). The catalysed reaction is uridine + ATP = UMP + ADP + H(+). Its pathway is pyrimidine metabolism; UMP biosynthesis via salvage pathway; UMP from uracil: step 1/1. The protein operates within pyrimidine metabolism; CTP biosynthesis via salvage pathway; CTP from cytidine: step 1/3. It functions in the pathway pyrimidine metabolism; UMP biosynthesis via salvage pathway; UMP from uridine: step 1/1. Its activity is regulated as follows. Allosterically activated by GTP. Involved in the pyrimidine salvage pathway. The uracil phosphoribosyltransferase (UPRT) activity, that catalyzes the conversion of uracil and 5-phospho-alpha-D-ribose 1-diphosphate (PRPP) to UMP and diphosphate, is unsure. This Arabidopsis thaliana (Mouse-ear cress) protein is Uridine kinase-like protein 3 (UKL3).